The sequence spans 636 residues: 1-deoxy-D-xylulose-5-phosphate synthase (636 aa).

Residues His-74 and 115–117 (GHA) each bind thiamine diphosphate. Position 146 (Asp-146) interacts with Mg(2+). Thiamine diphosphate contacts are provided by residues 147–148 (GA), Asn-175, Tyr-285, and Glu-368. Asn-175 is a binding site for Mg(2+).

Belongs to the transketolase family. DXPS subfamily. As to quaternary structure, homodimer. Mg(2+) is required as a cofactor. It depends on thiamine diphosphate as a cofactor.

It catalyses the reaction D-glyceraldehyde 3-phosphate + pyruvate + H(+) = 1-deoxy-D-xylulose 5-phosphate + CO2. The protein operates within metabolic intermediate biosynthesis; 1-deoxy-D-xylulose 5-phosphate biosynthesis; 1-deoxy-D-xylulose 5-phosphate from D-glyceraldehyde 3-phosphate and pyruvate: step 1/1. Functionally, catalyzes the acyloin condensation reaction between C atoms 2 and 3 of pyruvate and glyceraldehyde 3-phosphate to yield 1-deoxy-D-xylulose-5-phosphate (DXP). This Anaeromyxobacter sp. (strain K) protein is 1-deoxy-D-xylulose-5-phosphate synthase.